A 379-amino-acid polypeptide reads, in one-letter code: Salicylate/benzoate carboxyl methyltransferase (379 aa).

Tyrosine 40 contributes to the S-adenosyl-L-homocysteine binding site. Glutamine 47 lines the salicylate pocket. 6 residues coordinate S-adenosyl-L-homocysteine: cysteine 82, asparagine 87, aspartate 119, leucine 120, serine 155, and phenylalanine 156. The salicylate site is built by histidine 176 and tryptophan 177. Residues asparagine 188, aspartate 275, phenylalanine 277, and asparagine 278 each contribute to the Mg(2+) site.

This sequence belongs to the methyltransferase superfamily. Type-7 methyltransferase family. SABATH subfamily. In terms of assembly, homodimer. Requires Mg(2+) as cofactor. Expressed in flowers and at lower levels in leaves and stems. Hardly detected in roots and siliques. Expressed in the sepals and the leaf trichomes and hydathodes.

The catalysed reaction is benzoate + S-adenosyl-L-methionine = methyl benzoate + S-adenosyl-L-homocysteine. It catalyses the reaction salicylate + S-adenosyl-L-methionine = methyl salicylate + S-adenosyl-L-homocysteine. Methyltransferase involved in the biosynthesis of methylsalicylate in response to stresses. Utilizes salicylic acid (SA) more efficiently than benzoic acid (BA). Can also use anthranilic acid and m-hydroxybenzoic acid as substrate. The polypeptide is Salicylate/benzoate carboxyl methyltransferase (BSMT1) (Arabidopsis thaliana (Mouse-ear cress)).